Reading from the N-terminus, the 450-residue chain is Bifunctional apoptosis regulator (450 aa).

Positions 1-20 are enriched in basic and acidic residues; sequence MEEPQKNDLSMREQEEEHPV. The segment at 1 to 25 is disordered; it reads MEEPQKNDLSMREQEEEHPVRSSGP. At 1–140 the chain is on the cytoplasmic side; that stretch reads MEEPQKNDLS…PSTGRVNPQR (140 aa). Residues 34–74 form an RING-type zinc finger; that stretch reads CHCCYDTLVNPTTLNCGHSFCRHCLALWWMSSKKTECPECR. A helical membrane pass occupies residues 141-161; it reads GGGFFSGVLTALTGVAVILLV. At 162–331 the chain is on the extracellular side; it reads YHWRSRESEH…REPTWKQWRE (170 aa). Positions 182–249 constitute an SAM domain; it reads WTMEEVVLWL…LTELERVRAL (68 aa). Asn-232 and Asn-308 each carry an N-linked (GlcNAc...) asparagine glycan. The chain crosses the membrane as a helical span at residues 332 to 352; sequence FLVKYSFLPYQLIAEFAWDWL. Residues 353–360 lie on the Cytoplasmic side of the membrane; it reads EVHYWTSR. Residues 361 to 381 form a helical membrane-spanning segment; it reads FLIVNAVLLSVLELFSFWRIW. Over 382-404 the chain is Extracellular; sequence SRSELKTVPQRMWSHFWKVSTQG. A helical transmembrane segment spans residues 405–425; sequence LFMAMFWPLIPQFVCNCLFYW. The Cytoplasmic portion of the chain corresponds to 426–450; that stretch reads ALYFNPIINIDLVVKEVRRLETQVL.

In terms of assembly, interacts with CASP8, BCL2 and BCL2L1 through SAM domain and also with HIP1, IFT57, ESRRBL1 and BCAP31. Interacts with NGFR; this interaction inhibits NF-kappa-B and JNK-related signaling pathways. Post-translationally, mediates RING-dependent self-ubiquitination leading to proteasomal degradation.

The protein localises to the endoplasmic reticulum membrane. The enzyme catalyses S-ubiquitinyl-[E2 ubiquitin-conjugating enzyme]-L-cysteine + [acceptor protein]-L-lysine = [E2 ubiquitin-conjugating enzyme]-L-cysteine + N(6)-ubiquitinyl-[acceptor protein]-L-lysine.. Membrane-bound E3 ubiquitin ligase that plays a role in several processes including apoptosis regulation or reticulum endoplasmic stress. Has anti-apoptotic activity, both for apoptosis triggered via death-receptors and via mitochondrial factors. Contributes to the dynamic control of IRE1/ERN1 signaling during ER stress by inducing BAX inhibitor 1/TMBIM6 proteasomal degradation. Promotes the activation of TGF-beta signaling by mediating the 'Lys-63'-linked ubiquitination of TGFBR1 which is critical to activate the pathway. Together with NGFR, negatively regulates NF-kappa-B and JNK-related signaling pathways. Promotes the proteasome-mediated degradation of PNPLA3, a protein involveld in lipid metabolism. In Mus musculus (Mouse), this protein is Bifunctional apoptosis regulator (Bfar).